Reading from the N-terminus, the 171-residue chain is UPF0763 protein HPSH_03535 (171 aa).

This sequence belongs to the UPF0763 family.

This Helicobacter pylori (strain Shi470) protein is UPF0763 protein HPSH_03535.